A 299-amino-acid chain; its full sequence is Biphenyl-2,3-diol 1,2-dioxygenase (299 aa).

2 VOC domains span residues 6–121 (ELGY…IFYG) and 146–267 (GIGH…FGWG). H149, H212, and E263 together coordinate Fe cation.

It belongs to the extradiol ring-cleavage dioxygenase family. As to quaternary structure, homooctamer. Requires Fe(2+) as cofactor.

The enzyme catalyses biphenyl-2,3-diol + O2 = 2-hydroxy-6-oxo-6-phenylhexa-2,4-dienoate + H(+). The protein operates within xenobiotic degradation; biphenyl degradation; 2-hydroxy-2,4-pentadienoate and benzoate from biphenyl: step 3/4. The sequence is that of Biphenyl-2,3-diol 1,2-dioxygenase (bphC) from Sphingomonas paucimobilis (Pseudomonas paucimobilis).